The following is a 641-amino-acid chain: DNA mismatch repair protein MutL (641 aa).

The interval 345-445 (PAAVAPPAPA…GDTSLGDTSP (101 aa)) is disordered. The segment covering 419–429 (PRTEPATRTGE) has biased composition (basic and acidic residues). Over residues 432–442 (GISSGDTSLGD) the composition is skewed to polar residues.

It belongs to the DNA mismatch repair MutL/HexB family.

This protein is involved in the repair of mismatches in DNA. It is required for dam-dependent methyl-directed DNA mismatch repair. May act as a 'molecular matchmaker', a protein that promotes the formation of a stable complex between two or more DNA-binding proteins in an ATP-dependent manner without itself being part of a final effector complex. This is DNA mismatch repair protein MutL from Azotobacter vinelandii (strain DJ / ATCC BAA-1303).